Here is a 427-residue protein sequence, read N- to C-terminus: Glutamate-1-semialdehyde 2,1-aminomutase (427 aa).

The residue at position 267 (Lys267) is an N6-(pyridoxal phosphate)lysine.

The protein belongs to the class-III pyridoxal-phosphate-dependent aminotransferase family. HemL subfamily. As to quaternary structure, homodimer. It depends on pyridoxal 5'-phosphate as a cofactor.

The protein resides in the cytoplasm. The catalysed reaction is (S)-4-amino-5-oxopentanoate = 5-aminolevulinate. It functions in the pathway porphyrin-containing compound metabolism; protoporphyrin-IX biosynthesis; 5-aminolevulinate from L-glutamyl-tRNA(Glu): step 2/2. The chain is Glutamate-1-semialdehyde 2,1-aminomutase from Geobacter metallireducens (strain ATCC 53774 / DSM 7210 / GS-15).